Reading from the N-terminus, the 289-residue chain is Protoheme IX farnesyltransferase (289 aa).

Helical transmembrane passes span Val9–Met29, Met35–Ala55, Leu89–Trp109, Pro110–Leu130, Ile138–Gly158, Ala164–Met184, Asp188–Thr208, Val228–Ala248, and Phe269–Val289.

This sequence belongs to the UbiA prenyltransferase family. Protoheme IX farnesyltransferase subfamily.

The protein localises to the cell membrane. It carries out the reaction heme b + (2E,6E)-farnesyl diphosphate + H2O = Fe(II)-heme o + diphosphate. It participates in porphyrin-containing compound metabolism; heme O biosynthesis; heme O from protoheme: step 1/1. Converts heme B (protoheme IX) to heme O by substitution of the vinyl group on carbon 2 of heme B porphyrin ring with a hydroxyethyl farnesyl side group. This is Protoheme IX farnesyltransferase from Frankia alni (strain DSM 45986 / CECT 9034 / ACN14a).